Here is a 262-residue protein sequence, read N- to C-terminus: Translation initiation factor 2 subunit alpha (262 aa).

The 72-residue stretch at 15 to 86 (GELVVGTVHK…RKGHVDVSMK (72 aa)) folds into the S1 motif domain.

Belongs to the eIF-2-alpha family. Heterotrimer composed of an alpha, a beta and a gamma chain.

Functionally, eIF-2 functions in the early steps of protein synthesis by forming a ternary complex with GTP and initiator tRNA. The chain is Translation initiation factor 2 subunit alpha (eif2a) from Methanothermobacter thermautotrophicus (strain ATCC 29096 / DSM 1053 / JCM 10044 / NBRC 100330 / Delta H) (Methanobacterium thermoautotrophicum).